A 288-amino-acid polypeptide reads, in one-letter code: Syntaxin-1B (288 aa).

A compositionally biased stretch (basic and acidic residues) spans 1 to 13 (MKDRTQELRSAKD). The interval 1 to 20 (MKDRTQELRSAKDSDDEEEV) is disordered. Residues 1–264 (MKDRTQELRS…KYQSKARRKK (264 aa)) are Cytoplasmic-facing. Phosphoserine occurs at positions 10 and 14. Residues 29–104 (MDEFFEQVEE…IEQSIEQEEG (76 aa)) are a coiled coil. A t-SNARE coiled-coil homology domain is found at 191-253 (LNEIETRHNE…ERAVSDTKKA (63 aa)). Residues 265-288 (IMIIICCVVLGVVLASSIGGTLGL) form a helical; Anchor for type IV membrane protein membrane-spanning segment.

It belongs to the syntaxin family. In terms of assembly, interacts with OTOF. Interacts with SYT6 and SYT8; the interaction is Ca(2+)-dependent. In terms of processing, phosphorylated by CK2.

The protein localises to the membrane. It is found in the nucleus. The protein resides in the cytoplasm. It localises to the cytoskeleton. Its subcellular location is the microtubule organizing center. The protein localises to the centrosome. It is found in the spindle. In terms of biological role, potentially involved in docking of synaptic vesicles at presynaptic active zones. May mediate Ca(2+)-regulation of exocytosis acrosomal reaction in sperm. The chain is Syntaxin-1B (STX1B) from Homo sapiens (Human).